The sequence spans 484 residues: Palmitoyltransferase ZDHHC1 (484 aa).

2 stretches are compositionally biased toward polar residues: residues 1-11 (MNICNKPSNKT) and 19-34 (TAPS…LQGQ). The tract at residues 1–38 (MNICNKPSNKTAPEKSVWTAPSQDSGPSPELQGQRSRR) is disordered. At 1–49 (MNICNKPSNKTAPEKSVWTAPSQDSGPSPELQGQRSRRNGWSWPPHPLQ) the chain is on the cytoplasmic side. Residues 1 to 268 (MNICNKPSNK…GHLLCFHIYL (268 aa)) are mediates interaction with STING1. Residues 50 to 70 (IVAWLLYLFFAVIGFGVLVPL) traverse the membrane as a helical segment. Residues 71 to 74 (LPHH) lie on the Lumenal side of the membrane. A helical membrane pass occupies residues 75-95 (WVPAGYACMGAIFAGHLVVHL). The Cytoplasmic segment spans residues 96-182 (TAVSIDPADA…YRLFLHSVAS (87 aa)). Positions 131 to 181 (LHCNLCDVDVSARSKHCSACNKCVCGFDHHCKWLNNCVGERNYRLFLHSVA) constitute a DHHC domain. Catalysis depends on Cys-161, which acts as the S-palmitoyl cysteine intermediate. Residues 183–203 (ALLGVLLLVLVATYVFVEFFV) traverse the membrane as a helical segment. Residues 204 to 238 (NPMRLRTNQHFEVLKNHTDVWFVFLPAAPVETQAP) are Lumenal-facing. A helical membrane pass occupies residues 239-259 (AILALAALLILLGLLSTALLG). Residues 260–484 (HLLCFHIYLM…GTPGGGDGLP (225 aa)) lie on the Cytoplasmic side of the membrane. Disordered regions lie at residues 341-415 (TQGQ…VHAG) and 444-484 (LGAP…DGLP). Residues 364 to 374 (PQKKRKRRVYR) are compositionally biased toward basic residues. The span at 380-392 (VLDRELPLPRLRE) shows a compositional bias: basic and acidic residues. Residues 395–415 (TPSRRSSSSSDSTSASPVHAG) are compositionally biased toward low complexity. The segment covering 475-484 (GTPGGGDGLP) has biased composition (gly residues).

The protein belongs to the DHHC palmitoyltransferase family. In terms of assembly, interacts with STING1; ZDHHC1 constitutively interacts with STING1 and in presence of DNA viruses activates it by promoting its cGAMP-induced oligomerization and the recruitment of downstream signaling components. As to expression, expressed at high levels in fetal lung and heart. Expressed at lower levels in fetal liver and brain. Also detected in adult islet cells of pancreas, Leydig cells of testis, retina and molecular layer of cerebellum.

The protein localises to the endosome membrane. The protein resides in the endoplasmic reticulum membrane. It localises to the golgi apparatus. The catalysed reaction is L-cysteinyl-[protein] + hexadecanoyl-CoA = S-hexadecanoyl-L-cysteinyl-[protein] + CoA. Functionally, palmitoyltransferase that catalyzes the addition of palmitate onto various protein substrates, such as NCDN and NLRP3. Has a palmitoyltransferase activity toward NCDN and regulates NCDN association with endosome membranes through this palmitoylation. Acts as an activator of the NLRP3 inflammasome by mediating palmitoylation of 'Cys-130' and 'Cys-958' of NLRP3, thereby promoting NLRP3 phosphorylation and activation by NEK7. Its function is as follows. Also has a palmitoyltransferase activity-independent function in DNA virus-triggered and CGAS-mediated innate immune response. Functions as an activator of STING1 by promoting its cGAMP-induced oligomerization and the recruitment of downstream signaling components. In Mus musculus (Mouse), this protein is Palmitoyltransferase ZDHHC1.